The following is a 442-amino-acid chain: ATP-dependent protease ATPase subunit HslU (442 aa).

Residues I18 and 60–65 each bind ATP; that span reads GVGKTE. Residues 136-156 form a disordered region; sequence LPKPKNDWDSTDSDANSNTRQ. The ATP site is built by D255, E320, and R392.

It belongs to the ClpX chaperone family. HslU subfamily. In terms of assembly, a double ring-shaped homohexamer of HslV is capped on each side by a ring-shaped HslU homohexamer. The assembly of the HslU/HslV complex is dependent on binding of ATP.

It localises to the cytoplasm. ATPase subunit of a proteasome-like degradation complex; this subunit has chaperone activity. The binding of ATP and its subsequent hydrolysis by HslU are essential for unfolding of protein substrates subsequently hydrolyzed by HslV. HslU recognizes the N-terminal part of its protein substrates and unfolds these before they are guided to HslV for hydrolysis. The sequence is that of ATP-dependent protease ATPase subunit HslU from Shewanella sp. (strain MR-7).